The primary structure comprises 454 residues: Bifunctional protein GlmU (454 aa).

The tract at residues 1–226 is pyrophosphorylase; the sequence is MALNVVILAA…AIEVEGANNR (226 aa). Residues 8–11, Lys22, Gln73, 78–79, 100–102, Gly137, Glu151, Asn166, and Asn224 contribute to the UDP-N-acetyl-alpha-D-glucosamine site; these read LAAG, GT, and YGD. Asp102 provides a ligand contact to Mg(2+). Asn224 is a binding site for Mg(2+). The interval 227–247 is linker; the sequence is VQLAQLERAYQARAAEKLMLE. An N-acetyltransferase region spans residues 248 to 454; sequence GANLRDPARI…GWPRPVKLKK (207 aa). UDP-N-acetyl-alpha-D-glucosamine contacts are provided by Arg330 and Lys348. Residue His360 is the Proton acceptor of the active site. Residues Tyr363 and Asn374 each coordinate UDP-N-acetyl-alpha-D-glucosamine. Residues Ala377, 383 to 384, Ser402, Ala420, and Arg437 each bind acetyl-CoA; that span reads NY.

This sequence in the N-terminal section; belongs to the N-acetylglucosamine-1-phosphate uridyltransferase family. In the C-terminal section; belongs to the transferase hexapeptide repeat family. As to quaternary structure, homotrimer. Mg(2+) is required as a cofactor.

The protein localises to the cytoplasm. It carries out the reaction alpha-D-glucosamine 1-phosphate + acetyl-CoA = N-acetyl-alpha-D-glucosamine 1-phosphate + CoA + H(+). The catalysed reaction is N-acetyl-alpha-D-glucosamine 1-phosphate + UTP + H(+) = UDP-N-acetyl-alpha-D-glucosamine + diphosphate. Its pathway is nucleotide-sugar biosynthesis; UDP-N-acetyl-alpha-D-glucosamine biosynthesis; N-acetyl-alpha-D-glucosamine 1-phosphate from alpha-D-glucosamine 6-phosphate (route II): step 2/2. It functions in the pathway nucleotide-sugar biosynthesis; UDP-N-acetyl-alpha-D-glucosamine biosynthesis; UDP-N-acetyl-alpha-D-glucosamine from N-acetyl-alpha-D-glucosamine 1-phosphate: step 1/1. It participates in bacterial outer membrane biogenesis; LPS lipid A biosynthesis. Its function is as follows. Catalyzes the last two sequential reactions in the de novo biosynthetic pathway for UDP-N-acetylglucosamine (UDP-GlcNAc). The C-terminal domain catalyzes the transfer of acetyl group from acetyl coenzyme A to glucosamine-1-phosphate (GlcN-1-P) to produce N-acetylglucosamine-1-phosphate (GlcNAc-1-P), which is converted into UDP-GlcNAc by the transfer of uridine 5-monophosphate (from uridine 5-triphosphate), a reaction catalyzed by the N-terminal domain. The sequence is that of Bifunctional protein GlmU from Shewanella woodyi (strain ATCC 51908 / MS32).